The following is a 299-amino-acid chain: Nicotinate-nucleotide pyrophosphorylase [carboxylating] (299 aa).

The segment at 8 to 12 (FLLPP) is important for hexamer formation. Quinolinate-binding positions include Arg102, 138 to 139 (RK), 160 to 161 (HR), Lys171, Glu201, Asp222, 248 to 250 (SGG), and Gly270.

Belongs to the NadC/ModD family. In terms of assembly, hexamer formed by 3 homodimers.

It catalyses the reaction nicotinate beta-D-ribonucleotide + CO2 + diphosphate = quinolinate + 5-phospho-alpha-D-ribose 1-diphosphate + 2 H(+). It functions in the pathway cofactor biosynthesis; NAD(+) biosynthesis; nicotinate D-ribonucleotide from quinolinate: step 1/1. Involved in the catabolism of quinolinic acid (QA). This chain is Nicotinate-nucleotide pyrophosphorylase [carboxylating] (Qprt), found in Rattus norvegicus (Rat).